Here is a 1241-residue protein sequence, read N- to C-terminus: ATP-dependent helicase/nuclease subunit A (1241 aa).

The UvrD-like helicase ATP-binding domain occupies 12–485 (SQWTDDQWKA…IDLAKNFRSR (474 aa)). Residue 33 to 40 (AAAGSGKT) coordinates ATP. The region spanning 505 to 805 (GEIDYDADAE…RIMTIHKSKG (301 aa)) is the UvrD-like helicase C-terminal domain.

It belongs to the helicase family. AddA subfamily. In terms of assembly, heterodimer of AddA and AddB/RexB. The cofactor is Mg(2+).

The catalysed reaction is Couples ATP hydrolysis with the unwinding of duplex DNA by translocating in the 3'-5' direction.. It catalyses the reaction ATP + H2O = ADP + phosphate + H(+). In terms of biological role, the heterodimer acts as both an ATP-dependent DNA helicase and an ATP-dependent, dual-direction single-stranded exonuclease. Recognizes the chi site generating a DNA molecule suitable for the initiation of homologous recombination. The AddA nuclease domain is required for chi fragment generation; this subunit has the helicase and 3' -&gt; 5' nuclease activities. The protein is ATP-dependent helicase/nuclease subunit A of Bacillus cereus (strain G9842).